Here is a 67-residue protein sequence, read N- to C-terminus: Protein AaeX (67 aa).

2 helical membrane-spanning segments follow: residues 9–29 (IFGL…ALFF) and 47–67 (PALF…CLFV).

Belongs to the AaeX family.

Its subcellular location is the cell membrane. The polypeptide is Protein AaeX (Serratia marcescens).